The sequence spans 368 residues: DNA-dependent metalloprotease dvc-1 (368 aa).

Positions 21–190 (HALFIQFDAR…QSCGGNFLKV (170 aa)) constitute a SprT-like domain. Position 89 (H89) interacts with Zn(2+). E90 is an active-site residue. Residues H93 and H108 each contribute to the Zn(2+) site. The segment at 187-309 (FLKVKEPEGY…PVNFTSPSSA (123 aa)) is disordered. Over residues 226 to 237 (TLDDFFKKDGKN) the composition is skewed to basic and acidic residues. The span at 238 to 274 (SSDNSTSKSPTKPSTSLFTGSGQKLGGSSSTSSLLNS) shows a compositional bias: low complexity. The segment at 344 to 368 (SVICPSCNTEVMENLIHGHLDYCLG) adopts a UBZ4-type zinc-finger fold. Positions 347, 350, 362, and 366 each coordinate Zn(2+).

Belongs to the Spartan family. In terms of assembly, interacts with vcp/p97 (cdc-48.1 or cdc-48.2).

It localises to the nucleus. The protein resides in the chromosome. DNA-dependent metalloendopeptidase that mediates the proteolytic cleavage of covalent DNA-protein cross-links (DPCs) during DNA synthesis, thereby playing a key role in maintaining genomic integrity. DPCs are highly toxic DNA lesions that interfere with essential chromatin transactions, such as replication and transcription, and which are induced by reactive agents, such as UV light or formaldehyde. Associates with the DNA replication machinery and specifically removes DPCs during DNA synthesis. Regulator of UV-induced DNA damage response: required to protect genome stability during DNA replication, possibly via recruitment of vcp/p97 (cdc-48.1 or cdc-48.2) recruitment. In Caenorhabditis elegans, this protein is DNA-dependent metalloprotease dvc-1.